The following is a 110-amino-acid chain: Keratin-associated protein 6-3 (110 aa).

It belongs to the KRTAP type 6 family. As to quaternary structure, interacts with hair keratins.

In terms of biological role, in the hair cortex, hair keratin intermediate filaments are embedded in an interfilamentous matrix, consisting of hair keratin-associated proteins (KRTAP), which are essential for the formation of a rigid and resistant hair shaft through their extensive disulfide bond cross-linking with abundant cysteine residues of hair keratins. The matrix proteins include the high-sulfur and high-glycine-tyrosine keratins. This is Keratin-associated protein 6-3 from Homo sapiens (Human).